The chain runs to 156 residues: MTIHHDTPPTLNLIRLANGEGLDLPAYESKGAAGMDLRAAVDGDAPLTLAPGERALLPTGFIFEIPEGFEGQVRPRSGLAFKHGITCLNSPGTVDSDYRGEVKVLLANLGEEAFVIERGMRIAQMVIAPVTQARVTEIAAASETARGAGGFGSTGV.

Substrate is bound by residues 76–78, N89, 93–95, and K103; these read RSG and TVD.

It belongs to the dUTPase family. The cofactor is Mg(2+).

It catalyses the reaction dUTP + H2O = dUMP + diphosphate + H(+). It participates in pyrimidine metabolism; dUMP biosynthesis; dUMP from dCTP (dUTP route): step 2/2. This enzyme is involved in nucleotide metabolism: it produces dUMP, the immediate precursor of thymidine nucleotides and it decreases the intracellular concentration of dUTP so that uracil cannot be incorporated into DNA. The chain is Deoxyuridine 5'-triphosphate nucleotidohydrolase from Rhizobium etli (strain ATCC 51251 / DSM 11541 / JCM 21823 / NBRC 15573 / CFN 42).